The following is a 162-amino-acid chain: HTH-type transcriptional regulator IscR (162 aa).

The HTH rrf2-type domain maps to 2-131 (RLTSKGRYAV…NNITLGELVN (130 aa)). Positions 28 to 51 (LADISERQGISLSYLEQLFSRLRK) form a DNA-binding region, H-T-H motif. [2Fe-2S] cluster is bound by residues Cys-92, Cys-98, and Cys-104. The tract at residues 140 to 162 (GRQHTHDAPRTRTQDAIDVKLRA) is disordered. Positions 143 to 162 (HTHDAPRTRTQDAIDVKLRA) are enriched in basic and acidic residues.

Requires [2Fe-2S] cluster as cofactor.

In terms of biological role, regulates the transcription of several operons and genes involved in the biogenesis of Fe-S clusters and Fe-S-containing proteins. The protein is HTH-type transcriptional regulator IscR of Shigella flexneri.